The sequence spans 1067 residues: Kinesin-like protein KIF11-B (1067 aa).

Residues 18–359 (NIQVVVRCRP…LDYANRAKSI (342 aa)) form the Kinesin motor domain. 105-112 (GQTGTGKT) lines the ATP pocket. The stretch at 365 to 480 (VNQKLTKKAL…SKEQLAQESF (116 aa)) forms a coiled coil. Thr-937 carries the phosphothreonine; by CDK1 modification. Residue Ser-1046 is modified to Phosphoserine; by NEK6.

It belongs to the TRAFAC class myosin-kinesin ATPase superfamily. Kinesin family. BimC subfamily. In terms of assembly, heterotetramer of two heavy and two light chains. Interacts with aurka. In terms of processing, phosphorylation of Thr-937 during mitosis controls the association of this protein with the spindle apparatus. Post-translationally, a subset of this protein primarily localized at the spindle pole is phosphorylated by NEK6 during mitosis. Phosphorylated on a serine residue by aurka. As to expression, in unfertilized eggs, shows highest expression in the germinal vesicle and radial yolk-poor channels. Also present in testis.

Its subcellular location is the cytoplasm. The protein localises to the cytoskeleton. It localises to the spindle pole. Functionally, plus end-directed motor protein required for establishing a bipolar spindle. Associates with both interphase and spindle microtubules. May be involved in nuclear divisions taking place during the development of unfertilized eggs. Required in non-mitotic cells for transport of secretory proteins from the Golgi complex to the cell surface. This is Kinesin-like protein KIF11-B (kif11-b) from Xenopus laevis (African clawed frog).